A 127-amino-acid polypeptide reads, in one-letter code: Large ribosomal subunit protein bL20 (127 aa).

This sequence belongs to the bacterial ribosomal protein bL20 family.

Binds directly to 23S ribosomal RNA and is necessary for the in vitro assembly process of the 50S ribosomal subunit. It is not involved in the protein synthesizing functions of that subunit. The polypeptide is Large ribosomal subunit protein bL20 (Corynebacterium jeikeium (strain K411)).